The chain runs to 257 residues: NAD-capped RNA hydrolase NudC (257 aa).

Substrate is bound by residues Lys25 and Arg69. Zn(2+) contacts are provided by Cys98 and Cys101. Position 111 (Glu111) interacts with substrate. The Zn(2+) site is built by Cys116 and Cys119. A substrate-binding site is contributed by Tyr124. Residues 125–248 (PQIAPCIIVA…TVARRLIEDT (124 aa)) enclose the Nudix hydrolase domain. Residues Ala158, Glu174, and Glu178 each contribute to the a divalent metal cation site. Positions 159 to 180 (GFVEVGETLEQAVAREVMEESG) match the Nudix box motif. Residue 192–199 (QPWPFPQS) participates in substrate binding. Glu219 is a binding site for a divalent metal cation. Ala241 contacts substrate.

The protein belongs to the Nudix hydrolase family. NudC subfamily. In terms of assembly, homodimer. Mg(2+) serves as cofactor. It depends on Mn(2+) as a cofactor. Requires Zn(2+) as cofactor.

It catalyses the reaction a 5'-end NAD(+)-phospho-ribonucleoside in mRNA + H2O = a 5'-end phospho-adenosine-phospho-ribonucleoside in mRNA + beta-nicotinamide D-ribonucleotide + 2 H(+). The catalysed reaction is NAD(+) + H2O = beta-nicotinamide D-ribonucleotide + AMP + 2 H(+). It carries out the reaction NADH + H2O = reduced beta-nicotinamide D-ribonucleotide + AMP + 2 H(+). Its function is as follows. mRNA decapping enzyme that specifically removes the nicotinamide adenine dinucleotide (NAD) cap from a subset of mRNAs by hydrolyzing the diphosphate linkage to produce nicotinamide mononucleotide (NMN) and 5' monophosphate mRNA. The NAD-cap is present at the 5'-end of some mRNAs and stabilizes RNA against 5'-processing. Has preference for mRNAs with a 5'-end purine. Catalyzes the hydrolysis of a broad range of dinucleotide pyrophosphates. The protein is NAD-capped RNA hydrolase NudC of Shigella flexneri serotype 5b (strain 8401).